Reading from the N-terminus, the 139-residue chain is Acidic phospholipase A2 BpPLA2-TXI (139 aa).

An N-terminal signal peptide occupies residues 1-16 (MRTLWIMAVLLVGVEG). C44 and C60 are oxidised to a cystine. 2 residues coordinate Ca(2+): G45 and G47. The active site involves H63. D64 is a binding site for Ca(2+). Disulfide bonds link C65/C139, C73/C97, and C91/C102.

Belongs to the phospholipase A2 family. Group II subfamily. D49 sub-subfamily. Ca(2+) is required as a cofactor. As to expression, expressed by the venom gland.

The protein localises to the secreted. It carries out the reaction a 1,2-diacyl-sn-glycero-3-phosphocholine + H2O = a 1-acyl-sn-glycero-3-phosphocholine + a fatty acid + H(+). In terms of biological role, PLA2 catalyzes the calcium-dependent hydrolysis of the 2-acyl groups in 3-sn-phosphoglycerides. This Bothrops pauloensis (Neuwied's lancehead) protein is Acidic phospholipase A2 BpPLA2-TXI.